A 513-amino-acid polypeptide reads, in one-letter code: Solute carrier family 2, facilitated glucose transporter member 10 (513 aa).

Residues 1 to 6 (MGCSVL) are Cytoplasmic-facing. The chain crosses the membrane as a helical span at residues 7 to 27 (LLTITVSTLGGLVFGYELGII). Topologically, residues 28 to 46 (SGALPQLQTHFSLGCVQQE) are extracellular. Residues 47–67 (AVVSALLIGSLFASIIGGWLI) traverse the membrane as a helical segment. The Cytoplasmic portion of the chain corresponds to 68–80 (DRHGRRTSILLSN). The helical transmembrane segment at 81–101 (LLILAGSVILTTGTSFFALVI) threads the bilayer. The Extracellular segment spans residues 102 to 104 (GRA). A helical transmembrane segment spans residues 105–125 (VIGFAMTVSSMSCCIFVSEMV). At 126–130 (TPERR) the chain is on the cytoplasmic side. A helical transmembrane segment spans residues 131 to 151 (GLMVTLYEVGITVGILIAYAV). Residues 152–164 (NYIFNNVPLTGWR) lie on the Extracellular side of the membrane. A helical transmembrane segment spans residues 165–185 (YMFGFAIIPSLIQLASIVLLP). Topologically, residues 186–236 (KQAEVFVIHDDDSRQADRLTEETETSNQHQQSEKYGVSDLFKSKDNMRRRT) are cytoplasmic. The helical transmembrane segment at 237 to 257 (VIGVGLVLSQQFTGQPNVLFY) threads the bilayer. 246 to 247 (QQ) serves as a coordination point for D-glucose. Residues 258 to 272 (ASTILFSVGFQSNAS) lie on the Extracellular side of the membrane. N270 carries N-linked (GlcNAc...) asparagine glycosylation. Residues 273 to 293 (AILASVGFGIVKVIATLLAML) form a helical membrane-spanning segment. Over 294 to 301 (CSDRAGRR) the chain is Cytoplasmic. A helical transmembrane segment spans residues 302 to 322 (SLLIGGCSMLAVGLILTGFLC). Residues 323 to 376 (RQSVIDTTKRCTSVGPHSNLTLSAEHDEGVGFSSQTLDVHEHLRSFSQSEDIYK) are Extracellular-facing. N341 is a glycosylation site (N-linked (GlcNAc...) asparagine). The chain crosses the membrane as a helical span at residues 377 to 397 (WIIFTCLMAVVSAFSVSFGPM). Residues 398 to 422 (TWVVLSEIFPKDIRGRAFSFINCFN) lie on the Cytoplasmic side of the membrane. W399 provides a ligand contact to D-glucose. 2 consecutive transmembrane segments (helical) span residues 423–443 (VGANLIVSFSFLSIIDVIGLS) and 444–464 (GVFLMYGVVGIAGVVFIYLVL). Residues 465–513 (PETKGKSLQDIDRELSQTRMIHRQELCSIFQRRRFSPGYQRVQLTSTAT) lie on the Cytoplasmic side of the membrane.

The protein belongs to the major facilitator superfamily. Sugar transporter (TC 2.A.1.1) family. Glucose transporter subfamily.

The protein resides in the endomembrane system. The protein localises to the cytoplasm. It localises to the perinuclear region. It carries out the reaction D-glucose(out) = D-glucose(in). Its function is as follows. Facilitative glucose transporter required for the development of the cardiovascular system. This Danio rerio (Zebrafish) protein is Solute carrier family 2, facilitated glucose transporter member 10.